The following is a 638-amino-acid chain: Paramyosin (638 aa).

Positions 1 to 638 (FSPSTTRLES…EGDISVMQAD (638 aa)) form a coiled coil.

It belongs to the paramyosin family. Homodimer.

It is found in the cytoplasm. It localises to the myofibril. Functionally, paramyosin is a major structural component of many thick filaments isolated from invertebrate muscles. In Opisthorchis felineus, this protein is Paramyosin.